A 434-amino-acid chain; its full sequence is L-2-hydroxyglutarate dehydrogenase, mitochondrial (434 aa).

This sequence belongs to the L2HGDH family. The cofactor is FAD.

The protein localises to the mitochondrion. The catalysed reaction is (S)-2-hydroxyglutarate + A = 2-oxoglutarate + AH2. The chain is L-2-hydroxyglutarate dehydrogenase, mitochondrial from Caenorhabditis briggsae.